We begin with the raw amino-acid sequence, 462 residues long: Exodeoxyribonuclease 7 large subunit (462 aa).

Belongs to the XseA family. As to quaternary structure, heterooligomer composed of large and small subunits.

The protein localises to the cytoplasm. It carries out the reaction Exonucleolytic cleavage in either 5'- to 3'- or 3'- to 5'-direction to yield nucleoside 5'-phosphates.. Its function is as follows. Bidirectionally degrades single-stranded DNA into large acid-insoluble oligonucleotides, which are then degraded further into small acid-soluble oligonucleotides. This is Exodeoxyribonuclease 7 large subunit from Pectobacterium atrosepticum (strain SCRI 1043 / ATCC BAA-672) (Erwinia carotovora subsp. atroseptica).